The chain runs to 375 residues: tRNA-specific 2-thiouridylase MnmA 3 (375 aa).

ATP is bound by residues 11-18 and M37; that span reads GMSGGIDS. C104 acts as the Nucleophile in catalysis. C104 and C201 are disulfide-bonded. G128 contacts ATP. Residues 150–152 are interaction with tRNA; that stretch reads KDQ. C201 (cysteine persulfide intermediate) is an active-site residue. The tract at residues 309 to 310 is interaction with tRNA; the sequence is RY.

The protein belongs to the MnmA/TRMU family.

It localises to the cytoplasm. It catalyses the reaction S-sulfanyl-L-cysteinyl-[protein] + uridine(34) in tRNA + AH2 + ATP = 2-thiouridine(34) in tRNA + L-cysteinyl-[protein] + A + AMP + diphosphate + H(+). Functionally, catalyzes the 2-thiolation of uridine at the wobble position (U34) of tRNA, leading to the formation of s(2)U34. This is tRNA-specific 2-thiouridylase MnmA 3 from Phocaeicola vulgatus (strain ATCC 8482 / DSM 1447 / JCM 5826 / CCUG 4940 / NBRC 14291 / NCTC 11154) (Bacteroides vulgatus).